A 347-amino-acid chain; its full sequence is FMRFamide-related peptides (347 aa).

The first 22 residues, 1–22 (MGIALMFLLALYQMQSAIHSEI), serve as a signal peptide directing secretion. The propeptide occupies 23–102 (IDTPNYAGNS…RYKYDPELEA (80 aa)). A Phenylalanine amide modification is found at F114. Tyrosine amide is present on Y146. F157, F168, F179, F190, F201, F212, F223, and F232 each carry phenylalanine amide. The propeptide occupies 235–240 (SPHEEL). Phenylalanine amide occurs at positions 250 and 259. Serine amide is present on S270. F280 carries the post-translational modification Phenylalanine amide. The propeptide occupies 283–347 (SLKPAAPESK…SVEQDQFFGQ (65 aa)). Residues 283-347 (SLKPAAPESK…SVEQDQFFGQ (65 aa)) are disordered. Residues 305-320 (SPVDKAMTELFKKQEL) are compositionally biased toward basic and acidic residues. Over residues 321–347 (QDQQVKNGAQATTTQDGSVEQDQFFGQ) the composition is skewed to polar residues.

It belongs to the FARP (FMRFamide related peptide) family. In terms of processing, this precursor includes 13 peptides that have FMRF or related sequences at their C-termini, and other putative neuropeptides.

It localises to the secreted. In terms of biological role, in insects, FMRFamide and related peptides have modulatory actions at skeletal neuromuscular junctions, and peptides that are immunologically related to FMRFamide are released into the circulation from neurohemal organs. This is FMRFamide-related peptides from Drosophila melanogaster (Fruit fly).